Consider the following 1077-residue polypeptide: MPMFMDGASQVLQQVLQTVLVTSEPAIVIPGSFLGELDVIVDEAKNHGMKLVSIPKGGITILPPIPMSESSLTRLCKDYYGLKTDAERLALFSNLEETFPTAPGVSLPCRLLYHPRDYICRIVHLCAELVTASDEEYQKAYDIVPLLHIRPVQNVCEELRRQFRAGALTQRLPLGQRVDVQFKRTVVHLDGSMDPFPRNAAEAAVNIAPVALDAVDDIYEGFDVTGTEVVDIPTGKVSEYLSEKDFELVTEDSVLLDPTGKRVQAIFIRGGIDKDICRRAAADVEGVATKQNMRRLTNGGVRNPDTGILGYYDYLNNPTKRKCRMTEFTRRNWGKIIGPCGELLQLLDQLYKENAPDHYELQRRVIPPEYMLFNTVFSTVSVNKNFRTAVHRDKGDFRGGLTALCVLDGNYEGCYLALKSARKAFCLQVGDVLFFDSSLEHGNTEVHNREGSWRRISIVCYLRCGLMSHTCETERSMRLRNQIMSDRLHADSADSVVNLNGVTGHLPPLCIPFKIAKTLSLTQHAALRFVSRRIKEGDGCVLALTMGLGKTLVSLTICYSYIYNNGPCDILIVAPKTLLQHWMQEAKKWKDYGLVFPGFIVLNNVDSSSFEDDLSNYEQQGTTTNPKKSYVFVINPGYIKSFLSRVKGFRPALIVVDEGHCISSKESKLREVLDSLYCSARVVLTGTPVQNNAEELYRLVGWVDDKVHSTLPQRDFNEFSNSINRYVNGDDSAFCDALFAQRYIHEWMSPYVFTVMKVDLPPLHDYIIICNFSAVQQKMFEERIKVDATDNLLCLKASEHRPYHLSTHPLCFLGFLTGIWRTGQVDIEEEPGEFEELGTYRLSRDDDALAKDCSSLLENGKLADFVALSGKLTALISILHSIFEKMEKAVIFSQYIGSQDFIARTLTAYKISVVTIRGKDCQQRRRRVVEMFRDDKNVLCLVVSTQIGAYGLDLTAANHVILWDTWWNPQVESQAIARCYRQNQSKAVIAYKLASGFEDATVLKAQARKRALFKCLINEETSQVVPGHDLVDYTSSEEDDDRRHLWETLKTCTLEGGKPAVTKIIRNIDTVKSERWI.

A thymine dioxygenase region spans residues 1–516 (MPMFMDGASQ…PPLCIPFKIA (516 aa)). The Fe cation site is built by histidine 391, aspartate 393, and histidine 441. Arginine 455 lines the 2-oxoglutarate pocket. The DNA Helicase stretch occupies residues 517–1075 (KTLSLTQHAA…RNIDTVKSER (559 aa)). A Helicase ATP-binding domain is found at 531–706 (SRRIKEGDGC…YRLVGWVDDK (176 aa)). 544-551 (LTMGLGKT) provides a ligand contact to ATP. The DEAH box motif lies at 657 to 660 (DEGH). In terms of domain architecture, Helicase C-terminal spans 871–1032 (KLTALISILH…QVVPGHDLVD (162 aa)).

It in the C-terminal section; belongs to the SNF2/RAD54 helicase family. The protein in the N-terminal section; belongs to the TET family. JBP2 subfamily. Fe(2+) is required as a cofactor.

The protein localises to the nucleus. The catalysed reaction is ATP + H2O = ADP + phosphate + H(+). It catalyses the reaction thymine + 2-oxoglutarate + O2 = 5-hydroxymethyluracil + succinate + CO2. Functionally, dioxygenase that catalyzes the first step of DNA base J (beta-d-glucosyl-HOMedU) biosynthesis by converting thymine to 5-hydroxymethyluracil (HOMedU). DNA base J is a hypermodified thymidine residue found in the genome of kinetoplastid parasites, which is localized primarily to repetitive DNA, namely the telomeres, and is implicated in the regulation of antigenic variation. Probably also acts as a DNA helicase. Recognizes and binds specific regions of the genome, hydrolyzes ATP and allows the DNA base J de novo synthesis. Involved in initial synthesis of DNA base J, JBP1 being able to act via the basal level of DNA base J and propagate further synthesis. In contrast to JBP1, it does not specifically bind DNA base J, however it binds chromatin. This is Bifunctional helicase and thymine dioxygenase JBP2 (JBP2) from Trypanosoma brucei brucei (strain 927/4 GUTat10.1).